The primary structure comprises 538 residues: Cytochrome P450 monooxygenase cfoH (538 aa).

The chain crosses the membrane as a helical span at residues 24–44 (VLTFFAILLVAILLWYMIPYF). Cys-471 is a heme binding site.

It belongs to the cytochrome P450 family. Requires heme as cofactor.

It localises to the membrane. It participates in secondary metabolite biosynthesis; flavonoid biosynthesis. Cytochrome P450 monooxygenase; part of the gene cluster that mediates the biosynthesis of chlorflavonin, a fungal flavonoid with acetolactate synthase inhibitory activity. Within the pathway, cfoH is responsible for the hydroxylation of the flavonoid skeleton at position C2'. The pathway begins with the PKS-NRPS hybrid synthetase cfoA that uses benzoic acid or p-hydroxybenzoic acid as a starter unit with four rounds of chain elongation using malonyl-CoA to form the chalcone skeleton. Then, a new type of chalcone isomerase, cfoK, catalyzes the conversion of the chalcone into a flavanone by a histidine-mediated oxa-Michael addition mechanism. The desaturation of flavanone to flavone is catalyzed by a new type of flavone synthase, the flavin mononucleotide (FMN)-dependent oxidoreductase cfoJ. Monooxygenases cfoF, cfoG, and P450 cfoH are responsible for the hydroxylation of the flavonoid skeleton at sites C3, C8, and C2', respectively. Like cfoF, the dehydratase cfoI plays also a role in the hydroxylation of position C3. Methyltransferases cfoB, cfoC, and cfoD then catalyze the methylation of C7-OH, C8-OH, and C3-OH, respectively. Finally, the monooxygenase cfoE is responsible for the chlorination of flavonoid at position C3'. The polypeptide is Cytochrome P450 monooxygenase cfoH (Aspergillus candidus).